A 283-amino-acid polypeptide reads, in one-letter code: Polyamine aminopropyltransferase (283 aa).

Residues 5 to 238 enclose the PABS domain; the sequence is TTWIDEYHKG…GIWSWTFASS (234 aa). Gln32 provides a ligand contact to S-methyl-5'-thioadenosine. Residues His63 and Asp87 each contribute to the spermidine site. Residues Glu107 and 139–140 contribute to the S-methyl-5'-thioadenosine site; that span reads DG. The Proton acceptor role is filled by Asp158. Residue 158 to 161 coordinates spermidine; it reads DSSD.

Belongs to the spermidine/spermine synthase family. Homodimer or homotetramer.

The protein localises to the cytoplasm. It carries out the reaction S-adenosyl 3-(methylsulfanyl)propylamine + putrescine = S-methyl-5'-thioadenosine + spermidine + H(+). The protein operates within amine and polyamine biosynthesis; spermidine biosynthesis; spermidine from putrescine: step 1/1. Catalyzes the irreversible transfer of a propylamine group from the amino donor S-adenosylmethioninamine (decarboxy-AdoMet) to putrescine (1,4-diaminobutane) to yield spermidine. This is Polyamine aminopropyltransferase from Prochlorococcus marinus (strain MIT 9215).